Here is a 227-residue protein sequence, read N- to C-terminus: 2,3-bisphosphoglycerate-dependent phosphoglycerate mutase (227 aa).

Residues 8–15, 21–22, arginine 58, 110–113, lysine 121, 137–138, and 181–182 contribute to the substrate site; these read RHGKSVWN, TG, ERMY, RR, and GN. Histidine 9 acts as the Tele-phosphohistidine intermediate in catalysis. Glutamate 110 functions as the Proton donor/acceptor in the catalytic mechanism.

The protein belongs to the phosphoglycerate mutase family. BPG-dependent PGAM subfamily.

The enzyme catalyses (2R)-2-phosphoglycerate = (2R)-3-phosphoglycerate. The protein operates within carbohydrate degradation; glycolysis; pyruvate from D-glyceraldehyde 3-phosphate: step 3/5. Its function is as follows. Catalyzes the interconversion of 2-phosphoglycerate and 3-phosphoglycerate. This Chlamydia caviae (strain ATCC VR-813 / DSM 19441 / 03DC25 / GPIC) (Chlamydophila caviae) protein is 2,3-bisphosphoglycerate-dependent phosphoglycerate mutase.